A 1157-amino-acid polypeptide reads, in one-letter code: ATP-dependent helicase/deoxyribonuclease subunit B (1157 aa).

In terms of domain architecture, UvrD-like helicase ATP-binding spans 1–275 (MTLHAYLGRA…QYFNQLYRFN (275 aa)). Position 8 to 15 (8 to 15 (GRAGTGKS)) interacts with ATP. The region spanning 269 to 583 (NQLYRFNNQD…SIGTMDLAKV (315 aa)) is the UvrD-like helicase C-terminal domain. [4Fe-4S] cluster is bound by residues cysteine 784, cysteine 1112, cysteine 1115, and cysteine 1121.

Belongs to the helicase family. AddB/RexB type 1 subfamily. In terms of assembly, heterodimer of AddA and AddB. Mg(2+) serves as cofactor. It depends on [4Fe-4S] cluster as a cofactor.

The heterodimer acts as both an ATP-dependent DNA helicase and an ATP-dependent, dual-direction single-stranded exonuclease. Recognizes the chi site generating a DNA molecule suitable for the initiation of homologous recombination. The AddB subunit has 5' -&gt; 3' nuclease activity but not helicase activity. The chain is ATP-dependent helicase/deoxyribonuclease subunit B from Staphylococcus aureus (strain JH9).